Consider the following 293-residue polypeptide: 4-hydroxy-tetrahydrodipicolinate synthase (293 aa).

T45 lines the pyruvate pocket. Y133 (proton donor/acceptor) is an active-site residue. K161 (schiff-base intermediate with substrate) is an active-site residue. I203 contacts pyruvate.

Belongs to the DapA family. As to quaternary structure, homotetramer; dimer of dimers.

It localises to the cytoplasm. It catalyses the reaction L-aspartate 4-semialdehyde + pyruvate = (2S,4S)-4-hydroxy-2,3,4,5-tetrahydrodipicolinate + H2O + H(+). It functions in the pathway amino-acid biosynthesis; L-lysine biosynthesis via DAP pathway; (S)-tetrahydrodipicolinate from L-aspartate: step 3/4. Functionally, catalyzes the condensation of (S)-aspartate-beta-semialdehyde [(S)-ASA] and pyruvate to 4-hydroxy-tetrahydrodipicolinate (HTPA). This chain is 4-hydroxy-tetrahydrodipicolinate synthase, found in Shewanella denitrificans (strain OS217 / ATCC BAA-1090 / DSM 15013).